The sequence spans 251 residues: Ditrans,polycis-undecaprenyl-diphosphate synthase ((2E,6E)-farnesyl-diphosphate specific) (251 aa).

Asp29 is a catalytic residue. Asp29 provides a ligand contact to Mg(2+). Substrate contacts are provided by residues 30–33 (GNGK), Trp34, Arg42, His46, and 74–76 (SSD). Asn77 functions as the Proton acceptor in the catalytic mechanism. Residues Trp78, Arg80, Arg197, and 203 to 205 (RLS) contribute to the substrate site. Residue Glu216 coordinates Mg(2+).

The protein belongs to the UPP synthase family. Homodimer. The cofactor is Mg(2+).

The enzyme catalyses 8 isopentenyl diphosphate + (2E,6E)-farnesyl diphosphate = di-trans,octa-cis-undecaprenyl diphosphate + 8 diphosphate. Functionally, catalyzes the sequential condensation of isopentenyl diphosphate (IPP) with (2E,6E)-farnesyl diphosphate (E,E-FPP) to yield (2Z,6Z,10Z,14Z,18Z,22Z,26Z,30Z,34E,38E)-undecaprenyl diphosphate (di-trans,octa-cis-UPP). UPP is the precursor of glycosyl carrier lipid in the biosynthesis of bacterial cell wall polysaccharide components such as peptidoglycan and lipopolysaccharide. This Buchnera aphidicola subsp. Baizongia pistaciae (strain Bp) protein is Ditrans,polycis-undecaprenyl-diphosphate synthase ((2E,6E)-farnesyl-diphosphate specific).